The sequence spans 470 residues: Argininosuccinate lyase (470 aa).

Belongs to the lyase 1 family. Argininosuccinate lyase subfamily.

It localises to the cytoplasm. It catalyses the reaction 2-(N(omega)-L-arginino)succinate = fumarate + L-arginine. It participates in amino-acid biosynthesis; L-arginine biosynthesis; L-arginine from L-ornithine and carbamoyl phosphate: step 3/3. The protein is Argininosuccinate lyase of Mycobacterium tuberculosis (strain ATCC 25618 / H37Rv).